The following is a 299-amino-acid chain: Glycine--tRNA ligase alpha subunit (299 aa).

It belongs to the class-II aminoacyl-tRNA synthetase family. Tetramer of two alpha and two beta subunits.

It is found in the cytoplasm. The catalysed reaction is tRNA(Gly) + glycine + ATP = glycyl-tRNA(Gly) + AMP + diphosphate. This is Glycine--tRNA ligase alpha subunit from Laribacter hongkongensis (strain HLHK9).